A 208-amino-acid polypeptide reads, in one-letter code: Putative ADP-ribose pyrophosphatase YjhB (208 aa).

Residues 69-195 (TPKADVRGAV…NTPSQLSMLF (127 aa)) form the Nudix hydrolase domain. A Nudix box motif is present at residues 100–121 (GFCEIGLSPAENVVKEIKEESG). Mg(2+)-binding residues include Glu-115 and Glu-119.

The protein belongs to the Nudix hydrolase family. Mg(2+) serves as cofactor. It depends on Mn(2+) as a cofactor.

Its function is as follows. Probably mediates the hydrolysis of some nucleoside diphosphate derivatives. The protein is Putative ADP-ribose pyrophosphatase YjhB (yjhB) of Bacillus subtilis (strain 168).